The following is an 82-amino-acid chain: Exodeoxyribonuclease 7 small subunit (82 aa).

This sequence belongs to the XseB family. As to quaternary structure, heterooligomer composed of large and small subunits.

It localises to the cytoplasm. The catalysed reaction is Exonucleolytic cleavage in either 5'- to 3'- or 3'- to 5'-direction to yield nucleoside 5'-phosphates.. In terms of biological role, bidirectionally degrades single-stranded DNA into large acid-insoluble oligonucleotides, which are then degraded further into small acid-soluble oligonucleotides. The chain is Exodeoxyribonuclease 7 small subunit from Colwellia psychrerythraea (strain 34H / ATCC BAA-681) (Vibrio psychroerythus).